The sequence spans 576 residues: MRASKYHLNTLKEAPAEAEIASHQLMTRAGMIRKLAGGIYTYMPLGLKVIRKIEGIVREEMNAAGAIELLMPVVQPAELWMESGRWEQYGAELLRIKDRHQRDFVLQPTSEEVITDIARNEIQSYRQLPLNFYHIQTKFRDERRPRFGLMRGREFTMKDAYSFDRDEAGAQRSYDIMYAAYQRIFQRLSLEFRAVAADTGSIGGSRSHEFQVIADTGEDLIVYNPESDYAANIELAEAPALLAARAAPAQDLEAVPTPGAAKCEDVAKLLGLPLARTIKSIVLAVDQPEGPAQVWLLLLRGDHELNEIKAGKLPGLAGFRFATETEIVDHFGCKPGYLGPIKTARPVHVVADRTVANMADFVCGANREDYHYQGANWGRDLPEPELVADLRNVVEGDPSPDGKGALSIQRGIEVGHVFFLGTKYSEALKATFLDDNGKPAVLQMGCYGIGVTRIVGAAIEQNHDARGIIWPRAIAPYEVVICPVGWGKSETVRDTALALYEALRARGVDVMLDDRDSRPGVMFAEWELIGVPLRVTVGERGLNEGVVELQARREAEAAKVPVDQALAQTLAKLDLL.

Belongs to the class-II aminoacyl-tRNA synthetase family. ProS type 1 subfamily. Homodimer.

It localises to the cytoplasm. It carries out the reaction tRNA(Pro) + L-proline + ATP = L-prolyl-tRNA(Pro) + AMP + diphosphate. Its function is as follows. Catalyzes the attachment of proline to tRNA(Pro) in a two-step reaction: proline is first activated by ATP to form Pro-AMP and then transferred to the acceptor end of tRNA(Pro). As ProRS can inadvertently accommodate and process non-cognate amino acids such as alanine and cysteine, to avoid such errors it has two additional distinct editing activities against alanine. One activity is designated as 'pretransfer' editing and involves the tRNA(Pro)-independent hydrolysis of activated Ala-AMP. The other activity is designated 'posttransfer' editing and involves deacylation of mischarged Ala-tRNA(Pro). The misacylated Cys-tRNA(Pro) is not edited by ProRS. The protein is Proline--tRNA ligase of Bordetella parapertussis (strain 12822 / ATCC BAA-587 / NCTC 13253).